The following is a 405-amino-acid chain: L-rhamnonate dehydratase (405 aa).

Residues H33 and R59 each contribute to the substrate site. Mg(2+) contacts are provided by D226, E252, and E280. H329 (proton acceptor) is an active-site residue. E349 serves as a coordination point for substrate.

It belongs to the mandelate racemase/muconate lactonizing enzyme family. RhamD subfamily. In terms of assembly, homooctamer; tetramer of dimers. Requires Mg(2+) as cofactor.

It carries out the reaction L-rhamnonate = 2-dehydro-3-deoxy-L-rhamnonate + H2O. Functionally, catalyzes the dehydration of L-rhamnonate to 2-keto-3-deoxy-L-rhamnonate (KDR). This is L-rhamnonate dehydratase from Escherichia coli (strain K12 / DH10B).